The sequence spans 652 residues: Na(+)/H(+) antiporter NhaA 3 (652 aa).

A na(+)/H(+) antiporter NhaA region spans residues M1–F428. 11 helical membrane passes run E32–L52, L78–V98, M114–F134, V142–L162, F173–Y193, M200–V220, L227–L249, H306–V326, G342–V362, W376–I396, and V411–A431. The Thioredoxin domain occupies R429–A623. Residues R626–T652 form a disordered region. Over residues L627–A641 the composition is skewed to basic and acidic residues.

It in the N-terminal section; belongs to the NhaA Na(+)/H(+) (TC 2.A.33) antiporter family.

The protein localises to the cell membrane. The catalysed reaction is Na(+)(in) + 2 H(+)(out) = Na(+)(out) + 2 H(+)(in). In terms of biological role, na(+)/H(+) antiporter that extrudes sodium in exchange for external protons. This Salinispora tropica (strain ATCC BAA-916 / DSM 44818 / JCM 13857 / NBRC 105044 / CNB-440) protein is Na(+)/H(+) antiporter NhaA 3.